A 123-amino-acid chain; its full sequence is Transmembrane protein 254 (123 aa).

A run of 3 helical transmembrane segments spans residues 15–35 (LFWF…VFWP), 63–83 (NGYW…LVLC), and 95–115 (LLWF…LFAY).

Its subcellular location is the membrane. The chain is Transmembrane protein 254 (Tmem254) from Rattus norvegicus (Rat).